The chain runs to 146 residues: MSSQGKQYEYLDHTADIKFQAYGKTREEVFENAALAMFNVIIDTKKISGDTAREIFLKSPDLESLLVDWLSELLYLFEVDEIVFREFRVDNIREENGEYSITAQALGEKYDLKSLPFETEIKAVTYNQLEITKTADGWKAQVVVDI.

Residues Asp-16, Asp-145, and Ile-146 each contribute to the Ca(2+) site.

Belongs to the archease family.

Functionally, activates the tRNA-splicing ligase complex by facilitating the enzymatic turnover of catalytic subunit RtcB. Acts by promoting the guanylylation of RtcB, a key intermediate step in tRNA ligation. Can also alter the NTP specificity of RtcB such that ATP, dGTP or ITP is used efficiently. This is Protein archease from Methanosarcina barkeri (strain Fusaro / DSM 804).